A 229-amino-acid chain; its full sequence is Uracil-DNA glycosylase (229 aa).

D70 acts as the Proton acceptor in catalysis.

It belongs to the uracil-DNA glycosylase (UDG) superfamily. UNG family.

It localises to the cytoplasm. The catalysed reaction is Hydrolyzes single-stranded DNA or mismatched double-stranded DNA and polynucleotides, releasing free uracil.. Its function is as follows. Excises uracil residues from the DNA which can arise as a result of misincorporation of dUMP residues by DNA polymerase or due to deamination of cytosine. The protein is Uracil-DNA glycosylase of Chlamydia trachomatis serovar A (strain ATCC VR-571B / DSM 19440 / HAR-13).